Reading from the N-terminus, the 211-residue chain is Dephospho-CoA kinase (211 aa).

The DPCK domain occupies Leu-7–Glu-211. An ATP-binding site is contributed by Gly-15–Val-20.

The protein belongs to the CoaE family.

Its subcellular location is the cytoplasm. The catalysed reaction is 3'-dephospho-CoA + ATP = ADP + CoA + H(+). It participates in cofactor biosynthesis; coenzyme A biosynthesis; CoA from (R)-pantothenate: step 5/5. Catalyzes the phosphorylation of the 3'-hydroxyl group of dephosphocoenzyme A to form coenzyme A. This Treponema pallidum (strain Nichols) protein is Dephospho-CoA kinase.